Here is a 613-residue protein sequence, read N- to C-terminus: Methionine--tRNA ligase (613 aa).

Residues 15–25 carry the 'HIGH' region motif; the sequence is PYANGPRHIGH. Zn(2+) is bound by residues cysteine 147, cysteine 150, cysteine 160, and cysteine 163. The 'KMSKS' region motif lies at 351–355; the sequence is KFSSS. An ATP-binding site is contributed by serine 354.

The protein belongs to the class-I aminoacyl-tRNA synthetase family. MetG type 1 subfamily. Monomer. The cofactor is Zn(2+).

It is found in the cytoplasm. It catalyses the reaction tRNA(Met) + L-methionine + ATP = L-methionyl-tRNA(Met) + AMP + diphosphate. Functionally, is required not only for elongation of protein synthesis but also for the initiation of all mRNA translation through initiator tRNA(fMet) aminoacylation. This is Methionine--tRNA ligase from Corynebacterium efficiens (strain DSM 44549 / YS-314 / AJ 12310 / JCM 11189 / NBRC 100395).